Here is a 408-residue protein sequence, read N- to C-terminus: Succinylornithine transaminase (408 aa).

N6-(pyridoxal phosphate)lysine is present on K252.

The protein belongs to the class-III pyridoxal-phosphate-dependent aminotransferase family. AstC subfamily. The cofactor is pyridoxal 5'-phosphate.

The catalysed reaction is N(2)-succinyl-L-ornithine + 2-oxoglutarate = N-succinyl-L-glutamate 5-semialdehyde + L-glutamate. The protein operates within amino-acid degradation; L-arginine degradation via AST pathway; L-glutamate and succinate from L-arginine: step 3/5. Functionally, catalyzes the transamination of N(2)-succinylornithine and alpha-ketoglutarate into N(2)-succinylglutamate semialdehyde and glutamate. Can also act as an acetylornithine aminotransferase. This chain is Succinylornithine transaminase, found in Salmonella choleraesuis (strain SC-B67).